The chain runs to 168 residues: MEIGQYQPNLDGDGLRIGIVQARFNEPVCNGLADSCIEELERLGVTGEDVLLVTVPGALEIPLALQKLAESAQFDALIALGAVIRGETYHFELVSNESGAGITRIGLDFGIPVANAVLTTENDEQAVARMTEKGRDAARVAVEMANLAVALEQLGGDDEEEDEEEEEA.

5-amino-6-(D-ribitylamino)uracil contacts are provided by residues Phe24, 58–60, and 82–84; these read ALE and AVI. (2S)-2-hydroxy-3-oxobutyl phosphate is bound at residue 87-88; the sequence is ET. Catalysis depends on His90, which acts as the Proton donor. Asn115 is a 5-amino-6-(D-ribitylamino)uracil binding site. Arg129 lines the (2S)-2-hydroxy-3-oxobutyl phosphate pocket.

It belongs to the DMRL synthase family.

It catalyses the reaction (2S)-2-hydroxy-3-oxobutyl phosphate + 5-amino-6-(D-ribitylamino)uracil = 6,7-dimethyl-8-(1-D-ribityl)lumazine + phosphate + 2 H2O + H(+). It participates in cofactor biosynthesis; riboflavin biosynthesis; riboflavin from 2-hydroxy-3-oxobutyl phosphate and 5-amino-6-(D-ribitylamino)uracil: step 1/2. Catalyzes the formation of 6,7-dimethyl-8-ribityllumazine by condensation of 5-amino-6-(D-ribitylamino)uracil with 3,4-dihydroxy-2-butanone 4-phosphate. This is the penultimate step in the biosynthesis of riboflavin. The sequence is that of 6,7-dimethyl-8-ribityllumazine synthase from Paraburkholderia phytofirmans (strain DSM 17436 / LMG 22146 / PsJN) (Burkholderia phytofirmans).